A 182-amino-acid chain; its full sequence is Envelope glycoprotein L (182 aa).

The first 39 residues, 1 to 39 (MRRSAARGRAVSSTQTAMGAGAAIAVWAAALIALYSSCA), serve as a signal peptide directing secretion. A gL alphaherpesvirus-type domain is found at 52–182 (ANASDTIGRL…RPEKTAPGGV (131 aa)). C73 and C109 are disulfide-bonded.

This sequence belongs to the herpesviridae glycoprotein L (gL) family. Alphaherpesvirinae gL subfamily. In terms of assembly, interacts with glycoprotein H (gH); this interaction is necessary for the correct processing and cell surface expression of gH. The heterodimer gH/gL seems to interact with gB trimers during fusion. O-glycosylated, and sialylated.

Its subcellular location is the virion membrane. The protein localises to the host cell membrane. It localises to the host Golgi apparatus. The protein resides in the host trans-Golgi network. Its function is as follows. The heterodimer glycoprotein H-glycoprotein L is required for the fusion of viral and plasma membranes leading to virus entry into the host cell. Acts as a functional inhibitor of gH and maintains gH in an inhibited form. Upon binding to host integrins, gL dissociates from gH leading to activation of the viral fusion glycoproteins gB and gH. This is Envelope glycoprotein L from Amazona oratrix (yellow-headed parrot).